Reading from the N-terminus, the 120-residue chain is Phosphoribosyl-AMP cyclohydrolase (120 aa).

Aspartate 74 is a binding site for Mg(2+). Cysteine 75 is a Zn(2+) binding site. Mg(2+) contacts are provided by aspartate 76 and aspartate 78. Cysteine 91 and cysteine 98 together coordinate Zn(2+).

Belongs to the PRA-CH family. As to quaternary structure, homodimer. Requires Mg(2+) as cofactor. It depends on Zn(2+) as a cofactor.

Its subcellular location is the cytoplasm. It carries out the reaction 1-(5-phospho-beta-D-ribosyl)-5'-AMP + H2O = 1-(5-phospho-beta-D-ribosyl)-5-[(5-phospho-beta-D-ribosylamino)methylideneamino]imidazole-4-carboxamide. It functions in the pathway amino-acid biosynthesis; L-histidine biosynthesis; L-histidine from 5-phospho-alpha-D-ribose 1-diphosphate: step 3/9. In terms of biological role, catalyzes the hydrolysis of the adenine ring of phosphoribosyl-AMP. The polypeptide is Phosphoribosyl-AMP cyclohydrolase (Natronomonas pharaonis (strain ATCC 35678 / DSM 2160 / CIP 103997 / JCM 8858 / NBRC 14720 / NCIMB 2260 / Gabara) (Halobacterium pharaonis)).